We begin with the raw amino-acid sequence, 478 residues long: MPINSESCPLCKVHSNTIKKEDEDEEDNKTSWIQCSKCKVWYHVHCLDLPTDEIDQIVIYHCPECVPKYGESTYKRKSKRARVSIDYQSLNEGDTFAIDKSSHFHLHNFLNFKGETNINVIDKLTKTYALNTQMEKPILIPQADLSKNGMQLPIEKNEITIDYITDCCGEDTPLEVMDVISQQGISPPWKLKQWREYFKTNEEKRDRIRNVISLEISDVAKLGVDFTRPKCVRDMDVVDRVWIEEDEQKRSKVTKYCLMSVKNSFTDFHIDFGGTSVYYTVLSGAKTFLFFPPTDNNLELYKSWCLEPSQNFIWYPEYTITKNKKKIKPTGGFKVDLQPGDLFIIPSGWIHAVHTPQDSIVIGGNYLTIRDMVMQLKINEIERETKVPTKFRFPMFNKVLWLTAWYYYNHQNEFQSDIGEDEDGNAILTRLIGHLQGHLELSKTNATAKRSIPKTIGKPMVFINKLLAWKEDLYGTAV.

Residues 5–68 form a PHD-type zinc finger; the sequence is SESCPLCKVH…IYHCPECVPK (64 aa). One can recognise a JmjC domain in the interval 217–383; the sequence is SDVAKLGVDF…MQLKINEIER (167 aa). Thr-266 serves as a coordination point for substrate. Fe cation-binding residues include His-269 and Asp-271. Lys-286 contacts substrate. Position 351 (His-351) interacts with Fe cation.

It belongs to the JHDM1 histone demethylase family. The cofactor is Fe(2+).

Its subcellular location is the nucleus. It carries out the reaction N(6),N(6)-dimethyl-L-lysyl(36)-[histone H3] + 2 2-oxoglutarate + 2 O2 = L-lysyl(36)-[histone H3] + 2 formaldehyde + 2 succinate + 2 CO2. Functionally, histone demethylase that specifically demethylates 'Lys-36' of histone H3, thereby playing a central role in histone code. In Candida albicans (strain SC5314 / ATCC MYA-2876) (Yeast), this protein is JmjC domain-containing histone demethylation protein 1 (JHD1).